The chain runs to 510 residues: Propionyl-CoA carboxylase beta chain (510 aa).

The CoA carboxyltransferase N-terminal domain maps to 1-257; it reads MKDILQELEN…SNRTPAPVRP (257 aa). A carboxyltransferase region spans residues 1-504; the sequence is MKDILQELEN…NKKLANPWKK (504 aa). A CoA carboxyltransferase C-terminal domain is found at 264-504; that stretch reads RIEDSLDTLI…NKKLANPWKK (241 aa).

The protein belongs to the AccD/PCCB family. As to quaternary structure, probably a dodecamer composed of six biotin-containing alpha subunits and six beta subunits.

The enzyme catalyses propanoyl-CoA + hydrogencarbonate + ATP = (S)-methylmalonyl-CoA + ADP + phosphate + H(+). It functions in the pathway metabolic intermediate metabolism; propanoyl-CoA degradation; succinyl-CoA from propanoyl-CoA: step 1/3. The sequence is that of Propionyl-CoA carboxylase beta chain from Cereibacter sphaeroides (strain ATCC 17023 / DSM 158 / JCM 6121 / CCUG 31486 / LMG 2827 / NBRC 12203 / NCIMB 8253 / ATH 2.4.1.) (Rhodobacter sphaeroides).